A 126-amino-acid chain; its full sequence is Probable DNA-directed RNA polymerase II subunit RPB11 (126 aa).

It belongs to the archaeal Rpo11/eukaryotic RPB11/RPC19 RNA polymerase subunit family. Component of the RNA polymerase II (Pol II) complex consisting of 12 subunits.

It localises to the nucleus. Functionally, DNA-dependent RNA polymerase catalyzes the transcription of DNA into RNA using the four ribonucleoside triphosphates as substrates. Component of RNA polymerase II which synthesizes mRNA precursors and many functional non-coding RNAs. Pol II is the central component of the basal RNA polymerase II transcription machinery. It is composed of mobile elements that move relative to each other. RPB11 is part of the core element with the central large cleft. The polypeptide is Probable DNA-directed RNA polymerase II subunit RPB11 (Plasmodium chabaudi chabaudi).